A 301-amino-acid chain; its full sequence is rRNA methyltransferase 1, mitochondrial (301 aa).

The N-terminal 11 residues, 1–11 (MIRSRVNLARE), are a transit peptide targeting the mitochondrion. Positions 121–141 (YNNKNGQDSPHNDLNEGKSSS) are disordered.

The protein belongs to the class IV-like SAM-binding methyltransferase superfamily. RNA methyltransferase TrmH family.

The protein resides in the mitochondrion. The enzyme catalyses a guanosine in 21S rRNA + S-adenosyl-L-methionine = a 2'-O-methylguanosine in 21S rRNA + S-adenosyl-L-homocysteine + H(+). Functionally, S-adenosyl-L-methionine-dependent 2'-O-ribose methyltransferase that catalyzes the formation of the 2'-O-methylguanosine corresponding to position 2270 in S.cerevisiae 21S mitochondrial large subunit ribosomal RNA (mtLSU rRNA), a universally conserved modification in the peptidyl transferase domain of the mtLSU rRNA. In Schizosaccharomyces pombe (strain 972 / ATCC 24843) (Fission yeast), this protein is rRNA methyltransferase 1, mitochondrial.